A 455-amino-acid polypeptide reads, in one-letter code: Alcohol acyl transferase 1 allele GSb (455 aa).

Catalysis depends on proton acceptor residues H164 and N385.

This sequence belongs to the plant acyltransferase family. Expressed at very low levels in the skin of ripe fruit.

Involved in the biosynthesis of volatile esters which confer ripe apple fruit flavor. Alcohol acyl transferase that can use a wide range of alcohols as substrate to produce esters. This Malus domestica (Apple) protein is Alcohol acyl transferase 1 allele GSb.